A 191-amino-acid chain; its full sequence is Potassium-transporting ATPase KdpC subunit (191 aa).

Residues 10–30 traverse the membrane as a helical segment; sequence ITLVFCVFFSVFYILVLWLFA.

The protein belongs to the KdpC family. The system is composed of three essential subunits: KdpA, KdpB and KdpC.

It is found in the cell inner membrane. Part of the high-affinity ATP-driven potassium transport (or Kdp) system, which catalyzes the hydrolysis of ATP coupled with the electrogenic transport of potassium into the cytoplasm. This subunit acts as a catalytic chaperone that increases the ATP-binding affinity of the ATP-hydrolyzing subunit KdpB by the formation of a transient KdpB/KdpC/ATP ternary complex. This Bacteroides fragilis (strain YCH46) protein is Potassium-transporting ATPase KdpC subunit.